Here is a 780-residue protein sequence, read N- to C-terminus: Zinc finger and SCAN domain-containing protein 10 (780 aa).

The interval 1–38 (MLGESVPAAVEQEQLGEVKLEEEEAVSPEDPRRPESRL) is disordered. A compositionally biased stretch (basic and acidic residues) spans 29 to 38 (EDPRRPESRL). Residues 56–126 (MGPRASLSRL…LLLEGIHREP (71 aa)) form the SCAN box domain. Disordered regions lie at residues 153-237 (GCAS…SRDQ) and 255-324 (KAWP…GSLL). Phosphoserine occurs at positions 162 and 208. Positions 202–224 (SSKQPLSPGPQKTFQALQESSPQ) are enriched in polar residues. Residue Thr268 is modified to Phosphothreonine. Residues 268–280 (TPDKEEFKQEEPK) are compositionally biased toward basic and acidic residues. 14 C2H2-type zinc fingers span residues 347 to 370 (FICADCGVSFPQLSRLKAHQLRSH), 376 to 398 (FLCLCCGKSFGRSSILKLHMRTH), 404 to 426 (HACHLCGHRFRQSSHLSKHLLTH), 432 to 454 (FLCAECGRGFQRRASLVQHLLAH), 476 to 498 (VLCSHCGQSFQRRSSLKRHLRIH), 522 to 544 (FVCSDCGKAFRRSEHLVAHRRVH), 550 to 572 (FSCQACGRSFTQSSQLVSHQRVH), 578 to 600 (YACPQCGKRFVRRASLARHLLTH), 606 to 628 (HHCTQCGKSFGQTQDLARHQRSH), 634 to 656 (CRCSECGEGFSQSAHLARHQRIH), 662 to 684 (HACDTCGHRFRNSSNLARHRRSH), 690 to 712 (YSCQTCGRSFRRNAHLRRHLATH), 724 to 746 (QECVECGKSFSRSCNLLRHLLVH), and 752 to 774 (YSCTQCGRSFSRNSHLLRHLRTH). Position 483 is an N5-methylglutamine (Gln483). Positions 492–520 (KRHLRIHARDKDRRSSEGSGSRRRDSDRR) are disordered. A compositionally biased stretch (basic and acidic residues) spans 498–520 (HARDKDRRSSEGSGSRRRDSDRR).

Interacts with POU5F1/OCT4 and SOX2. In terms of processing, methylated at Gln-483 by N6AMT1.

The protein localises to the nucleus. In terms of biological role, embryonic stem (ES) cell-specific transcription factor required to maintain ES cell pluripotency. Can both activate and /or repress expression of target genes, depending on the context. Specifically binds the 5'-[GA]CGCNNGCG[CT]-3' DNA consensus sequence. Regulates expression of POU5F1/OCT4, ZSCAN4 and ALYREF/THOC4. The polypeptide is Zinc finger and SCAN domain-containing protein 10 (ZSCAN10) (Homo sapiens (Human)).